Consider the following 443-residue polypeptide: Chromosome partition protein MukF (443 aa).

A leucine-zipper region spans residues 209–237 (LDETSGNLRELQDTLNAAGDKLQAQLLRI).

This sequence belongs to the MukF family. Interacts, and probably forms a ternary complex, with MukE and MukB via its C-terminal region. The complex formation is stimulated by calcium or magnesium. It is required for an interaction between MukE and MukB.

It localises to the cytoplasm. Its subcellular location is the nucleoid. Its function is as follows. Involved in chromosome condensation, segregation and cell cycle progression. May participate in facilitating chromosome segregation by condensation DNA from both sides of a centrally located replisome during cell division. Not required for mini-F plasmid partitioning. Probably acts via its interaction with MukB and MukE. Overexpression results in anucleate cells. It has a calcium binding activity. The polypeptide is Chromosome partition protein MukF (Actinobacillus pleuropneumoniae serotype 3 (strain JL03)).